Consider the following 824-residue polypeptide: Dapper 1 (824 aa).

Disordered stretches follow at residues 1 to 34, 61 to 80, 131 to 150, 454 to 487, and 516 to 536; these read MKPI…QRTR, ALTP…GDTP, EEHL…LSDG, TSNV…ESTQ, and ASSS…SSSQ. Residues 2–343 form an interaction with tcf7l1 region; sequence KPIPATPDHL…PVRTNKPRTS (342 aa). The span at 11–34 shows a compositional bias: basic and acidic residues; sequence LGQHQESPRRKDKGEAESERQRTR. Residues 19–47 adopt a coiled-coil conformation; sequence RRKDKGEAESERQRTRERLEATLAGLAEL. The span at 520–530 shows a compositional bias: basic and acidic residues; it reads FDERPPLDFKS. Positions 821–824 match the PDZ-binding motif; the sequence is MTTV.

Belongs to the dapper family. As to quaternary structure, interacts with dbf4, dvl2 and tcf7l1.

It is found in the cytoplasm. It localises to the nucleus. Involved in regulation of intracellular signaling pathways during development. Specifically thought to play a role in canonical and/or non-canonical Wnt signaling pathways through interaction with DSH (Dishevelled) family proteins. Binds to dvl2 and regulates the degradation of ctnnb1/beta-catenin, thereby modulating the transcriptional activation of target genes of the Wnt signaling pathway. May also bind to and directly stimulate the activity of tcf7l1. The chain is Dapper 1 (dact1) from Xenopus tropicalis (Western clawed frog).